Here is a 218-residue protein sequence, read N- to C-terminus: Adenylate kinase (218 aa).

10–15 is an ATP binding site; that stretch reads GAGKGT. Positions 30–59 are NMP; it reads STGDMLRAAVKAGTPLGLQAKAVMDSGSLV. Residues threonine 31, arginine 36, 57 to 59, 85 to 88, and glutamine 92 contribute to the AMP site; these read SLV and GFPR. The tract at residues 122–159 is LID; that stretch reads GRRSHPASGRTYHVRFNPPKIDGKDDLTGEALLQREDD. Residues arginine 123 and 132–133 contribute to the ATP site; that span reads TY. 2 residues coordinate AMP: arginine 156 and arginine 167. Glycine 203 is an ATP binding site.

This sequence belongs to the adenylate kinase family. As to quaternary structure, monomer.

The protein resides in the cytoplasm. The enzyme catalyses AMP + ATP = 2 ADP. Its pathway is purine metabolism; AMP biosynthesis via salvage pathway; AMP from ADP: step 1/1. Its function is as follows. Catalyzes the reversible transfer of the terminal phosphate group between ATP and AMP. Plays an important role in cellular energy homeostasis and in adenine nucleotide metabolism. This is Adenylate kinase from Verminephrobacter eiseniae (strain EF01-2).